We begin with the raw amino-acid sequence, 753 residues long: MVSVGSKSLPSRRHRTIEEDSLMGERGKSSNNHSERNKGMRRKDHKGNRGFDVDSSKKNQSGGAPNVKPASKKHSEFEHQNQFVRKEIDPETSKYFSEIANLFDSNEVELEERSVICGNALEETRGREYEIATDYIISHVLQTLLEGCELDQLCSFIRNSASVFPAIAMDRSGSHVAESALKSLATHLENPDAYSVIEEALHSICKVIVDNPLDMMCNCYGSHVLRRLLCLCKGVSLDSPELYGAKSSKALAKRLNLKMSQLDDNNLEIPHQGFPGMLTYLLSGLLSCSREDMKYLQVDQYSSLVLQTALRLMLKQDEQLLEIIPLILRCNSTNKKVEGFHIETNVAKEILESMKDNSFSHLVEVILEVAPESLYNEMFNKVFKNSLFELSVDRCANFVIQALISHARDQEQMGIMWEELAPRFKDLLEQGKSGVVASLIAVSQRLQSHENKCCEALVGAVCSTNESRISILPRLLFLDYYFGCRDKSTWEWAPGAKMHVMGCLILQGIFKFSSDHIQPYITSLTSMKAEYITETAKDSSGARVIEAFLASDAATKQKRRLIIKLRGHFGELSLHTSGSFTVEKCFDACNLTLREAIASELLDVKVDLSKTKQGPYLLRKLDIDGYASRPDQWKSRQEAKQSTYNEFCSAFGSNKSNFPKNTFVSDASEDAAQEIEVKNTRKEIDHHPTSGFKRHREKHAKDKDEPFAGEKRSKQKKNKTSEATDKPKLAGSKRPFLSGEMTGKNRHSNKMRI.

Residues 1-84 are disordered; sequence MVSVGSKSLP…SEFEHQNQFV (84 aa). 3 stretches are compositionally biased toward basic and acidic residues: residues 23 to 38, 47 to 57, and 73 to 84; these read MGER…ERNK, GNRGFDVDSSK, and KHSEFEHQNQFV. Pumilio repeat units follow at residues 123–158, 159–198, 206–244, 284–325, 345–380, 381–418, 526–563, and 564–599; these read ETRG…SFIR, NSAS…SVIE, KVIV…ELYG, GLLS…EIIP, NVAK…EMFN, KVFK…IMWE, SMKA…RLII, and KLRG…AIAS. One can recognise a PUM-HD domain in the interval 322–675; sequence EIIPLILRCN…DASEDAAQEI (354 aa). Basic and acidic residues-rich tracts occupy residues 677–688, 699–712, and 719–728; these read VKNTRKEIDHHP, HAKD…GEKR, and KTSEATDKPK. Residues 677-753 form a disordered region; the sequence is VKNTRKEIDH…KNRHSNKMRI (77 aa). A compositionally biased stretch (basic residues) spans 744 to 753; the sequence is KNRHSNKMRI.

It localises to the nucleus. The protein resides in the nucleolus. Sequence-specific RNA-binding protein that regulates translation and mRNA stability by binding the 3'-UTR of target mRNAs. This is Pumilio homolog 23 (APUM23) from Arabidopsis thaliana (Mouse-ear cress).